The sequence spans 207 residues: Small ribosomal subunit protein uS4 (207 aa).

A disordered region spans residues 31–55; that stretch reads KCKLDSKPGQHGRTSGARTSDYGTQ. Residues 42 to 53 are compositionally biased toward polar residues; that stretch reads GRTSGARTSDYG. Residues 97–160 enclose the S4 RNA-binding domain; that stretch reads SRLDNVVYRM…KKQARIVEAL (64 aa).

It belongs to the universal ribosomal protein uS4 family. In terms of assembly, part of the 30S ribosomal subunit. Contacts protein S5. The interaction surface between S4 and S5 is involved in control of translational fidelity.

Its function is as follows. One of the primary rRNA binding proteins, it binds directly to 16S rRNA where it nucleates assembly of the body of the 30S subunit. In terms of biological role, with S5 and S12 plays an important role in translational accuracy. The chain is Small ribosomal subunit protein uS4 from Burkholderia lata (strain ATCC 17760 / DSM 23089 / LMG 22485 / NCIMB 9086 / R18194 / 383).